The sequence spans 693 residues: Elongation factor G (693 aa).

The tr-type G domain occupies 8-282; sequence EKTRNIGIMA…AVIDYLPSPL (275 aa). GTP is bound by residues 17–24, 81–85, and 135–138; these read AHIDAGKT, DTPGH, and NKMD.

It belongs to the TRAFAC class translation factor GTPase superfamily. Classic translation factor GTPase family. EF-G/EF-2 subfamily.

The protein localises to the cytoplasm. Catalyzes the GTP-dependent ribosomal translocation step during translation elongation. During this step, the ribosome changes from the pre-translocational (PRE) to the post-translocational (POST) state as the newly formed A-site-bound peptidyl-tRNA and P-site-bound deacylated tRNA move to the P and E sites, respectively. Catalyzes the coordinated movement of the two tRNA molecules, the mRNA and conformational changes in the ribosome. The polypeptide is Elongation factor G (Staphylococcus aureus (strain Mu3 / ATCC 700698)).